Consider the following 182-residue polypeptide: UPF0301 protein NMB1336 (182 aa).

The protein belongs to the UPF0301 (AlgH) family.

This is UPF0301 protein NMB1336 from Neisseria meningitidis serogroup B (strain ATCC BAA-335 / MC58).